Reading from the N-terminus, the 350-residue chain is Arginine N-succinyltransferase (350 aa).

Leu125 contacts succinyl-CoA. The active-site Proton donor is His229.

Belongs to the arginine N-succinyltransferase family.

The enzyme catalyses succinyl-CoA + L-arginine = N(2)-succinyl-L-arginine + CoA + H(+). It functions in the pathway amino-acid degradation; L-arginine degradation via AST pathway; L-glutamate and succinate from L-arginine: step 1/5. Its function is as follows. Catalyzes the transfer of succinyl-CoA to arginine to produce N(2)-succinylarginine. This Yersinia pseudotuberculosis serotype O:3 (strain YPIII) protein is Arginine N-succinyltransferase.